The chain runs to 834 residues: Kinesin-like protein KIF18B (834 aa).

The Kinesin motor domain occupies 9–353 (VVRVVVRVRP…LKYADRAKEI (345 aa)). 111-118 (GATGAGKT) is a binding site for ATP. Residues 368–404 (ISQYATICQQLQAEVAFLREKLQMYEAGAQALQQQCS) adopt a coiled-coil conformation. 4 disordered regions span residues 400–508 (QQQC…ADHS), 602–642 (LGAP…NLEM), 655–686 (RGSL…RVCP), and 800–834 (KKPN…TESY). A compositionally biased stretch (low complexity) spans 411-432 (SIPQSLSSSSLQPGPSSQSSTL). Residue threonine 431 is modified to Phosphothreonine. The span at 462-474 (EQEQCPQDKQCPT) shows a compositional bias: polar residues. Serine 484 carries the post-translational modification Phosphoserine. Residues 611-620 (TSDKTFQKPT) show a composition bias toward basic and acidic residues. The Nuclear localization signal motif lies at 619 to 627 (PTKEKKRKL). Phosphoserine is present on residues serine 634 and serine 657. At threonine 669 the chain carries Phosphothreonine. Serine 814 is subject to Phosphoserine.

The protein belongs to the TRAFAC class myosin-kinesin ATPase superfamily. Kinesin family. Interacts with MAPRE1; this interaction is required for efficient accumulation at microtubule plus ends. Interacts with KIF2C at microtubule tips; this interaction increases the affinity of both partners for microtubule plus ends and is required for robust microtubule depolymerization. KIF2C phosphorylation by AURKA or AURKB strongly reduces KIF18B-binding.

The protein localises to the nucleus. The protein resides in the cytoplasm. It is found in the cytoskeleton. In complex with KIF2C, constitutes the major microtubule plus-end depolymerizing activity in mitotic cells. Its major role may be to transport KIF2C and/or MAPRE1 along microtubules. The protein is Kinesin-like protein KIF18B (Kif18b) of Mus musculus (Mouse).